The sequence spans 835 residues: Translation initiation factor IF-2 (835 aa).

Residues 1 to 243 (MSDTDGKKTL…RARQKAMGGA (243 aa)) are disordered. A compositionally biased stretch (low complexity) spans 43-67 (VPKPGAGKPSAGGSSPAGDPSRRPA). Basic and acidic residues-rich tracts occupy residues 85-147 (KARE…EAKR), 157-166 (EAPKAERSAE), and 175-205 (EGGDNARRTTDRDREREQRQTRGKGRQDGRR). The tr-type G domain occupies 332 to 500 (PRPPVITIMG…AIALQAEILE (169 aa)). Residues 341–348 (GHVDHGKT) form a G1 region. GTP is bound at residue 341 to 348 (GHVDHGKT). The interval 366–370 (GITQH) is G2. The tract at residues 388–391 (DTPG) is G3. GTP-binding positions include 388 to 392 (DTPGH) and 442 to 445 (NKID). The G4 stretch occupies residues 442-445 (NKID). The G5 stretch occupies residues 478–480 (SAK).

The protein belongs to the TRAFAC class translation factor GTPase superfamily. Classic translation factor GTPase family. IF-2 subfamily.

It localises to the cytoplasm. In terms of biological role, one of the essential components for the initiation of protein synthesis. Protects formylmethionyl-tRNA from spontaneous hydrolysis and promotes its binding to the 30S ribosomal subunits. Also involved in the hydrolysis of GTP during the formation of the 70S ribosomal complex. The polypeptide is Translation initiation factor IF-2 (Ruegeria pomeroyi (strain ATCC 700808 / DSM 15171 / DSS-3) (Silicibacter pomeroyi)).